Reading from the N-terminus, the 1548-residue chain is Multidrug resistance protein (1548 aa).

Over 1 to 238 (MVDNGHVTIA…YHVWAQILPK (238 aa)) the chain is Cytoplasmic. The 284-residue stretch at 231–514 (VWAQILPKLL…IPIIISSILQ (284 aa)) folds into the ABC transmembrane type-1 1 domain. Residues 239 to 256 (LLSDVTALMLPVLLEYFV) form a helical membrane-spanning segment. The N-linked (GlcNAc...) asparagine glycan is linked to N263. The next 5 helical transmembrane spans lie at 266 to 287 (WGWGLGLALTIFLTNVIQSCSA), 349 to 367 (VMYFWSAPLQLVLCLLLLI), 375 to 392 (VPGMAVLFVTLPLQAVIS), 463 to 480 (ATPTLVIAVVFILYHVSG), and 500 to 519 (VSFFMIPIIISSILQCFVSA). The Cytoplasmic segment spans residues 520–932 (KRVTAFIECP…PWSTYVAYLK (413 aa)). One can recognise an ABC transporter 1 domain in the interval 634–855 (VEEGDREYYQ…ALEETLRGEL (222 aa)). 667 to 674 (GSTGSGKS) is a binding site for ATP. Helical transmembrane passes span 933–950 (SCGGLEAWGCLLATFALT), 975–993 (TYLYVYLFIVFLEIFGSPL), 1051–1070 (GYLYLLEYFFSMCSTVIIMV), and 1072–1088 (VQPFVLVAIVPCVYSYY). The region spanning 940–1221 (WGCLLATFAL…LVRQVAMVEA (282 aa)) is the ABC transmembrane type-1 2 domain. Residues N1095 and N1154 are each glycosylated (N-linked (GlcNAc...) asparagine). 2 helical membrane passes run 1164-1182 (LEFLSCVVTFMVAFIGVIG) and 1186-1205 (GASSQNIGLISLSLTMSMTL). Topologically, residues 1206 to 1548 (TETLNWLVRQ…RIVQPAVLSD (343 aa)) are cytoplasmic. Residues 1286-1521 (LVLEGVQMRY…HQSMFHSMVE (236 aa)) form the ABC transporter 2 domain. 1320–1327 (GRTGSGKS) lines the ATP pocket.

This sequence belongs to the ABC transporter superfamily. ABCB family. Multidrug resistance exporter (TC 3.A.1.201) subfamily.

The protein localises to the membrane. It carries out the reaction ATP + H2O + xenobioticSide 1 = ADP + phosphate + xenobioticSide 2.. This chain is Multidrug resistance protein (PGPA), found in Leishmania tarentolae (Sauroleishmania tarentolae).